Here is a 313-residue protein sequence, read N- to C-terminus: Ribosomal RNA small subunit methyltransferase H (313 aa).

Residues 36–38, D56, F80, D102, and Q109 contribute to the S-adenosyl-L-methionine site; that span reads GGH.

The protein belongs to the methyltransferase superfamily. RsmH family.

It localises to the cytoplasm. It carries out the reaction cytidine(1402) in 16S rRNA + S-adenosyl-L-methionine = N(4)-methylcytidine(1402) in 16S rRNA + S-adenosyl-L-homocysteine + H(+). Functionally, specifically methylates the N4 position of cytidine in position 1402 (C1402) of 16S rRNA. The polypeptide is Ribosomal RNA small subunit methyltransferase H (Haemophilus ducreyi (strain 35000HP / ATCC 700724)).